A 3603-amino-acid polypeptide reads, in one-letter code: Plipastatin synthase subunit D (3603 aa).

A condensation 1 region spans residues 7–306 (IQDIYPLSYM…NTMPVRVQGA (300 aa)). Positions 7 to 1043 (IQDIYPLSYM…ALIIREAEQN (1037 aa)) are domain 1 (proline-activating). An adenylation 1 region spans residues 490–889 (TYRELNKAAN…NHPDISEAAI (400 aa)). Positions 966–1041 (APRNLLEAKL…GLALIIREAE (76 aa)) constitute a Carrier 1 domain. Residue Ser-1001 is modified to O-(pantetheine 4'-phosphoryl)serine. The tract at residues 1053 to 1334 (KRDTYPVSSA…NTLALRTRPA (282 aa)) is condensation 2. The domain 2 (glutamine-activating) stretch occupies residues 1053–2069 (KRDTYPVSSA…TVEGLATVIR (1017 aa)). An adenylation 2 region spans residues 1521 to 1924 (TYKELNEQAN…SIEGVREAAV (404 aa)). Residues 1997 to 2072 (APRNVTEMKL…GLATVIREGT (76 aa)) form the Carrier 2 domain. O-(pantetheine 4'-phosphoryl)serine is present on Ser-2032. The interval 2084–2374 (KQETYPVSSA…NTLALRTRPE (291 aa)) is condensation 3. Residues 2084-3596 (KQETYPVSSA…ELTEDALQEI (1513 aa)) are domain 3 (proline-activating). An adenylation 3 region spans residues 2560-2956 (TYQELDEWSN…CIKGVKDAAV (397 aa)). Residues 3034–3108 (PPSSKMEQIL…ELAAYIRDSD (75 aa)) enclose the Carrier 3 domain. O-(pantetheine 4'-phosphoryl)serine is present on Ser-3069. The interval 3116-3596 (VEGDVQWSPV…ELTEDALQEI (481 aa)) is epimerization.

Belongs to the ATP-dependent AMP-binding enzyme family. Requires pantetheine 4'-phosphate as cofactor.

In terms of biological role, this protein is a multifunctional enzyme, able to activate and polymerize the amino acids Pro, Gln and Tyr as part of the biosynthesis of the lipopeptide antibiotic plipastatin. The Tyr residue is further epimerized to the D-isomer form. The activation sites for these amino acids consist of individual domains. This Bacillus subtilis (strain 168) protein is Plipastatin synthase subunit D (ppsD).